The following is a 295-amino-acid chain: Glycine N-acyltransferase-like protein Keg1 (295 aa).

Residue lysine 41 is modified to N6-acetyllysine; alternate. Residue lysine 41 is modified to N6-succinyllysine; alternate. Position 43 is an N6-acetyllysine (lysine 43). Lysine 48 carries the post-translational modification N6-acetyllysine; alternate. Lysine 48 carries the post-translational modification N6-succinyllysine; alternate. An N6-acetyllysine mark is found at lysine 80 and lysine 83. Residues lysine 124, lysine 128, and lysine 140 each carry the N6-acetyllysine; alternate modification. N6-succinyllysine; alternate is present on residues lysine 124, lysine 128, and lysine 140. The residue at position 150 (lysine 150) is an N6-acetyllysine. Lysine 255 is modified (N6-acetyllysine; alternate). Lysine 255 is modified (N6-succinyllysine; alternate).

The protein belongs to the glycine N-acyltransferase family. As to quaternary structure, binds to microtubules. As to expression, specifically expressed in kidney and liver. Up-regulated in the regenerating liver as well as in hepatocellular carcinoma.

It localises to the cytoplasm. It is found in the cytoskeleton. The protein resides in the microtubule organizing center. The protein localises to the centrosome. The enzyme catalyses an acyl-CoA + glycine = an N-acylglycine + CoA + H(+). Functionally, acyltransferase which transfers the acyl group to the N-terminus of glycine. Can conjugate a multitude of substrates to form a variety of N-acylglycines. This Rattus norvegicus (Rat) protein is Glycine N-acyltransferase-like protein Keg1 (Keg1).